Reading from the N-terminus, the 138-residue chain is MFRSRVSGVFQQVRFQSTAASKAASKAQGLGAKVQGITNCAVYWAKVTGELGKQIYLKEGFAPPSLSQFQSVYQNLFNSVKSYALKPQKVIDCAESITKTDALRYTAYGVQILGLFTLGEVIGRRNVIGYKVPSADKH.

It belongs to the ATPase g subunit family. F-type ATP synthases have 2 components, the catalytic core F(1) and the membrane-embedded component F(0), linked together by a central stalk and a peripheral stalk. The central stalk, also called rotor shaft, is often seen as part of F(1). The peripheral stalk is seen as part of F(0). F(0) contains the membrane channel next to the rotor. F-type ATP synthases form dimers but each monomer functions independently in ATP generation. The dimer consists of 17 different polypeptides: ATP1 (subunit alpha, 3 molecules per monomer, part of F(1)), ATP2 (subunit beta, 3 copies per monomer, part of F(1)), ATP3 (subunit gamma, part of the central stalk), ATP4 (subunit b, part of the peripheral stalk), ATP5/OSCP (subunit 5/OSCP, part of the peripheral stalk), ATP6 (subunit a, part of the peripheral stalk), ATP7 (subunit d, part of the peripheral stalk), ATP8 (subunit 8, part of the peripheral stalk), OLI1 (subunit c, part of the rotor, 10 molecules per monomer), ATP14 (subunit h, part of the peripheral stalk), ATP15 (subunit epsilon, part of the central stalk), ATP16 (subunit delta, part of the central stalk), ATP17 (subunit f, part of the peripheral stalk), ATP18 (subunit i/j, part of the peripheral stalk), ATP19 (subunit k, dimer-specific, at interface between monomers), ATP20 (subunit g, at interface between monomers), TIM11 (subunit e, at interface between monomers).

It localises to the mitochondrion inner membrane. Its function is as follows. Mitochondrial membrane ATP synthase (F(1)F(0) ATP synthase or Complex V) produces ATP from ADP in the presence of a proton gradient across the membrane which is generated by electron transport complexes of the respiratory chain. F-type ATP synthases consist of two structural domains, F(1) - containing the extramembraneous catalytic core, and F(0) - containing the membrane proton channel, linked together by a central stalk and a peripheral stalk. During catalysis, ATP synthesis in the catalytic domain of F(1) is coupled via a rotary mechanism of the central stalk subunits to proton translocation. Part of the complex F(0) domain. Minor subunit located with subunit a/ATP6 in the membrane. Together with subunit e/TIM11, probably contributes to membrane curvature at the site of the ATP synthase dimer, ultimately contributing to formation of cristae. The sequence is that of ATP synthase subunit g, mitochondrial from Yarrowia lipolytica (strain CLIB 122 / E 150) (Yeast).